The following is a 396-amino-acid chain: Enoyl-[acyl-carrier-protein] reductase [NADH] (396 aa).

NAD(+)-binding positions include 48-53, 74-75, 111-112, and 139-140; these read GASTGY, FE, DA, and LA. Tyr225 is a substrate binding site. The active-site Proton donor is Tyr235. NAD(+) contacts are provided by residues Lys244 and 273 to 275; that span reads VVT.

It belongs to the TER reductase family. As to quaternary structure, monomer.

It catalyses the reaction a 2,3-saturated acyl-[ACP] + NAD(+) = a (2E)-enoyl-[ACP] + NADH + H(+). It participates in lipid metabolism; fatty acid biosynthesis. Functionally, involved in the final reduction of the elongation cycle of fatty acid synthesis (FAS II). Catalyzes the reduction of a carbon-carbon double bond in an enoyl moiety that is covalently linked to an acyl carrier protein (ACP). The chain is Enoyl-[acyl-carrier-protein] reductase [NADH] from Colwellia psychrerythraea (strain 34H / ATCC BAA-681) (Vibrio psychroerythus).